The following is a 234-amino-acid chain: 7-cyano-7-deazaguanine synthase (234 aa).

8 to 18 (FSGGQDSTTCA) lines the ATP pocket. C194, C202, C205, and C208 together coordinate Zn(2+).

It belongs to the QueC family. Zn(2+) serves as cofactor.

It catalyses the reaction 7-carboxy-7-deazaguanine + NH4(+) + ATP = 7-cyano-7-deazaguanine + ADP + phosphate + H2O + H(+). It participates in purine metabolism; 7-cyano-7-deazaguanine biosynthesis. Functionally, catalyzes the ATP-dependent conversion of 7-carboxy-7-deazaguanine (CDG) to 7-cyano-7-deazaguanine (preQ(0)). The sequence is that of 7-cyano-7-deazaguanine synthase from Gloeobacter violaceus (strain ATCC 29082 / PCC 7421).